The chain runs to 361 residues: Phosphoserine aminotransferase (361 aa).

An L-glutamate-binding site is contributed by R43. Residues 77–78 (AS), W103, T153, D173, and Q196 each bind pyridoxal 5'-phosphate. An N6-(pyridoxal phosphate)lysine modification is found at K197. 238–239 (NT) serves as a coordination point for pyridoxal 5'-phosphate.

This sequence belongs to the class-V pyridoxal-phosphate-dependent aminotransferase family. SerC subfamily. Homodimer. Pyridoxal 5'-phosphate is required as a cofactor.

The protein localises to the cytoplasm. The enzyme catalyses O-phospho-L-serine + 2-oxoglutarate = 3-phosphooxypyruvate + L-glutamate. It catalyses the reaction 4-(phosphooxy)-L-threonine + 2-oxoglutarate = (R)-3-hydroxy-2-oxo-4-phosphooxybutanoate + L-glutamate. It participates in amino-acid biosynthesis; L-serine biosynthesis; L-serine from 3-phospho-D-glycerate: step 2/3. The protein operates within cofactor biosynthesis; pyridoxine 5'-phosphate biosynthesis; pyridoxine 5'-phosphate from D-erythrose 4-phosphate: step 3/5. Catalyzes the reversible conversion of 3-phosphohydroxypyruvate to phosphoserine and of 3-hydroxy-2-oxo-4-phosphonooxybutanoate to phosphohydroxythreonine. This is Phosphoserine aminotransferase from Pseudomonas entomophila (strain L48).